The chain runs to 128 residues: Ribosome-binding factor A (128 aa).

It belongs to the RbfA family. As to quaternary structure, monomer. Binds 30S ribosomal subunits, but not 50S ribosomal subunits or 70S ribosomes.

The protein resides in the cytoplasm. In terms of biological role, one of several proteins that assist in the late maturation steps of the functional core of the 30S ribosomal subunit. Associates with free 30S ribosomal subunits (but not with 30S subunits that are part of 70S ribosomes or polysomes). Required for efficient processing of 16S rRNA. May interact with the 5'-terminal helix region of 16S rRNA. This is Ribosome-binding factor A from Rippkaea orientalis (strain PCC 8801 / RF-1) (Cyanothece sp. (strain PCC 8801)).